Here is a 278-residue protein sequence, read N- to C-terminus: Large ribosomal subunit protein uL2 (278 aa).

Disordered regions lie at residues Met-1 to Asp-20, Thr-25 to His-58, and Gly-223 to Arg-278. A compositionally biased stretch (basic residues) spans Leu-37–His-58. Residues Pro-253–Ile-268 are compositionally biased toward basic and acidic residues. Basic residues predominate over residues Val-269–Arg-278.

It belongs to the universal ribosomal protein uL2 family. Part of the 50S ribosomal subunit. Forms a bridge to the 30S subunit in the 70S ribosome.

One of the primary rRNA binding proteins. Required for association of the 30S and 50S subunits to form the 70S ribosome, for tRNA binding and peptide bond formation. It has been suggested to have peptidyltransferase activity; this is somewhat controversial. Makes several contacts with the 16S rRNA in the 70S ribosome. This Mycolicibacterium smegmatis (strain ATCC 700084 / mc(2)155) (Mycobacterium smegmatis) protein is Large ribosomal subunit protein uL2.